The primary structure comprises 176 residues: Shikimate kinase (176 aa).

14–19 (GAGKST) lines the ATP pocket. Mg(2+) is bound at residue Ser18. Residues Asp36, Arg60, and Gly83 each coordinate substrate. Arg121 is an ATP binding site. Arg140 provides a ligand contact to substrate.

The protein belongs to the shikimate kinase family. Monomer. Mg(2+) serves as cofactor.

Its subcellular location is the cytoplasm. The enzyme catalyses shikimate + ATP = 3-phosphoshikimate + ADP + H(+). The protein operates within metabolic intermediate biosynthesis; chorismate biosynthesis; chorismate from D-erythrose 4-phosphate and phosphoenolpyruvate: step 5/7. In terms of biological role, catalyzes the specific phosphorylation of the 3-hydroxyl group of shikimic acid using ATP as a cosubstrate. This Francisella tularensis subsp. holarctica (strain FTNF002-00 / FTA) protein is Shikimate kinase.